A 312-amino-acid chain; its full sequence is Glyoxylate/hydroxypyruvate reductase A (312 aa).

The active site involves arginine 227. Histidine 275 functions as the Proton donor in the catalytic mechanism.

The protein belongs to the D-isomer specific 2-hydroxyacid dehydrogenase family. GhrA subfamily.

Its subcellular location is the cytoplasm. The enzyme catalyses glycolate + NADP(+) = glyoxylate + NADPH + H(+). It catalyses the reaction (R)-glycerate + NAD(+) = 3-hydroxypyruvate + NADH + H(+). It carries out the reaction (R)-glycerate + NADP(+) = 3-hydroxypyruvate + NADPH + H(+). In terms of biological role, catalyzes the NADPH-dependent reduction of glyoxylate and hydroxypyruvate into glycolate and glycerate, respectively. This is Glyoxylate/hydroxypyruvate reductase A from Escherichia coli O157:H7.